A 267-amino-acid chain; its full sequence is Dihydropteroate synthase (267 aa).

The Pterin-binding domain maps to methionine 1–lysine 251. Asparagine 11 serves as a coordination point for Mg(2+). (7,8-dihydropterin-6-yl)methyl diphosphate-binding positions include threonine 51, aspartate 84, asparagine 103, aspartate 167, lysine 203, and arginine 239–histidine 241.

It belongs to the DHPS family. As to quaternary structure, homodimer. Mg(2+) is required as a cofactor.

The catalysed reaction is (7,8-dihydropterin-6-yl)methyl diphosphate + 4-aminobenzoate = 7,8-dihydropteroate + diphosphate. It participates in cofactor biosynthesis; tetrahydrofolate biosynthesis; 7,8-dihydrofolate from 2-amino-4-hydroxy-6-hydroxymethyl-7,8-dihydropteridine diphosphate and 4-aminobenzoate: step 1/2. In terms of biological role, catalyzes the condensation of para-aminobenzoate (pABA) with 6-hydroxymethyl-7,8-dihydropterin diphosphate (DHPt-PP) to form 7,8-dihydropteroate (H2Pte), the immediate precursor of folate derivatives. This is Dihydropteroate synthase (folP) from Staphylococcus aureus (strain MSSA476).